The chain runs to 266 residues: Phosphatidylglycerol--prolipoprotein diacylglyceryl transferase (266 aa).

Transmembrane regions (helical) follow at residues 14–34, 55–75, 91–111, and 117–137; these read FGPL…AFFW, FLFY…ILFY, WKGG…MWLF, and VSMF…LFFG. R138 contributes to the a 1,2-diacyl-sn-glycero-3-phospho-(1'-sn-glycerol) binding site. Transmembrane regions (helical) follow at residues 172-192, 201-221, and 235-255; these read YPTQ…ILMF, GAAS…VEFF, and WVTM…ALVV.

It belongs to the Lgt family.

It is found in the cell inner membrane. The enzyme catalyses L-cysteinyl-[prolipoprotein] + a 1,2-diacyl-sn-glycero-3-phospho-(1'-sn-glycerol) = an S-1,2-diacyl-sn-glyceryl-L-cysteinyl-[prolipoprotein] + sn-glycerol 1-phosphate + H(+). It participates in protein modification; lipoprotein biosynthesis (diacylglyceryl transfer). Catalyzes the transfer of the diacylglyceryl group from phosphatidylglycerol to the sulfhydryl group of the N-terminal cysteine of a prolipoprotein, the first step in the formation of mature lipoproteins. The polypeptide is Phosphatidylglycerol--prolipoprotein diacylglyceryl transferase (Hydrogenovibrio crunogenus (strain DSM 25203 / XCL-2) (Thiomicrospira crunogena)).